Reading from the N-terminus, the 369-residue chain is Chorismate synthase (369 aa).

NADP(+)-binding residues include arginine 48 and arginine 54. Residues 125-127 (RSS), 238-239 (NA), glycine 283, 298-302 (KPTSS), and arginine 324 each bind FMN.

The protein belongs to the chorismate synthase family. Homotetramer. FMNH2 is required as a cofactor.

It catalyses the reaction 5-O-(1-carboxyvinyl)-3-phosphoshikimate = chorismate + phosphate. It participates in metabolic intermediate biosynthesis; chorismate biosynthesis; chorismate from D-erythrose 4-phosphate and phosphoenolpyruvate: step 7/7. Catalyzes the anti-1,4-elimination of the C-3 phosphate and the C-6 proR hydrogen from 5-enolpyruvylshikimate-3-phosphate (EPSP) to yield chorismate, which is the branch point compound that serves as the starting substrate for the three terminal pathways of aromatic amino acid biosynthesis. This reaction introduces a second double bond into the aromatic ring system. This chain is Chorismate synthase, found in Acidiphilium cryptum (strain JF-5).